Here is a 160-residue protein sequence, read N- to C-terminus: Transcription antitermination protein NusB (160 aa).

Belongs to the NusB family.

Its function is as follows. Involved in transcription antitermination. Required for transcription of ribosomal RNA (rRNA) genes. Binds specifically to the boxA antiterminator sequence of the ribosomal RNA (rrn) operons. The sequence is that of Transcription antitermination protein NusB from Mycolicibacterium smegmatis (strain ATCC 700084 / mc(2)155) (Mycobacterium smegmatis).